Consider the following 361-residue polypeptide: MYRRLLRPALFRLDPEDAHHLTLRALGLASAVPAWPSLVRRLTAPTDLRLTQTLWGRTFSSPLGLAAGLDKNGEAVPAFGALGFGFVEVGTVTPRAQPGNARPRLFRLPSDEALINRMGFNNAGAEALQGQLAAHFARPVPVWVNIGKNKVTPNEEAVQDYREAVRVLQAVADAFVVNVSSPNTPGLRALQAAGDLAALVRAVLDEVEAGRVRTLSRPPVLVKLAPDLHPADFEASVGAVLEAGADGLIIGNTTLRREGLTHPRRGETGGLSGRPLTARSTELVRAAYRLTRGRMPIVGVGGIFTAEDAYAKIRAGARLVEVYTALIYEGPGLPARLNRDLARLLARDGVRHLTEAVGVDL.

FMN is bound by residues 67-71 (AGLDK) and Thr-91. Lys-71 contacts substrate. Residue 116 to 120 (NRMGF) coordinates substrate. 2 residues coordinate FMN: Asn-145 and Asn-178. Residue Asn-178 participates in substrate binding. Catalysis depends on Ser-181, which acts as the Nucleophile. A substrate-binding site is contributed by Asn-183. Lys-223 and Gly-251 together coordinate FMN. A substrate-binding site is contributed by 252–253 (NT). Residues Gly-273, Gly-302, and 323–324 (YT) contribute to the FMN site.

It belongs to the dihydroorotate dehydrogenase family. Type 2 subfamily. Monomer. FMN serves as cofactor.

The protein resides in the cell membrane. The enzyme catalyses (S)-dihydroorotate + a quinone = orotate + a quinol. It functions in the pathway pyrimidine metabolism; UMP biosynthesis via de novo pathway; orotate from (S)-dihydroorotate (quinone route): step 1/1. In terms of biological role, catalyzes the conversion of dihydroorotate to orotate with quinone as electron acceptor. The protein is Dihydroorotate dehydrogenase (quinone) of Deinococcus geothermalis (strain DSM 11300 / CIP 105573 / AG-3a).